The primary structure comprises 550 residues: Endonuclease/exonuclease/phosphatase family domain-containing protein 1 (550 aa).

Residues Glu39–Tyr68 enclose the HhH domain. Residues Ser194 to Ser213 are compositionally biased toward polar residues. Residues Ser194 to Pro216 are disordered.

The chain is Endonuclease/exonuclease/phosphatase family domain-containing protein 1 (eepd1) from Danio rerio (Zebrafish).